The following is a 94-amino-acid chain: Small ribosomal subunit protein bS18 (94 aa).

This sequence belongs to the bacterial ribosomal protein bS18 family. As to quaternary structure, part of the 30S ribosomal subunit. Forms a tight heterodimer with protein bS6.

Functionally, binds as a heterodimer with protein bS6 to the central domain of the 16S rRNA, where it helps stabilize the platform of the 30S subunit. In Rickettsia bellii (strain OSU 85-389), this protein is Small ribosomal subunit protein bS18.